The following is a 72-amino-acid chain: NAD(P)H-quinone oxidoreductase subunit O (72 aa).

It belongs to the complex I NdhO subunit family. In terms of assembly, NDH-1 can be composed of about 15 different subunits; different subcomplexes with different compositions have been identified which probably have different functions.

The protein localises to the cellular thylakoid membrane. The catalysed reaction is a plastoquinone + NADH + (n+1) H(+)(in) = a plastoquinol + NAD(+) + n H(+)(out). It carries out the reaction a plastoquinone + NADPH + (n+1) H(+)(in) = a plastoquinol + NADP(+) + n H(+)(out). Its function is as follows. NDH-1 shuttles electrons from an unknown electron donor, via FMN and iron-sulfur (Fe-S) centers, to quinones in the respiratory and/or the photosynthetic chain. The immediate electron acceptor for the enzyme in this species is believed to be plastoquinone. Couples the redox reaction to proton translocation, and thus conserves the redox energy in a proton gradient. Cyanobacterial NDH-1 also plays a role in inorganic carbon-concentration. This is NAD(P)H-quinone oxidoreductase subunit O from Synechococcus sp. (strain JA-3-3Ab) (Cyanobacteria bacterium Yellowstone A-Prime).